We begin with the raw amino-acid sequence, 259 residues long: Type III pantothenate kinase (259 aa).

Position 6 to 13 (6 to 13) interacts with ATP; sequence DCGNTNTL. Residue 108–111 participates in substrate binding; that stretch reads GADR. Catalysis depends on aspartate 110, which acts as the Proton acceptor. Aspartate 130 contacts K(+). Threonine 133 contacts ATP. Substrate is bound at residue threonine 185.

It belongs to the type III pantothenate kinase family. In terms of assembly, homodimer. The cofactor is NH4(+). K(+) serves as cofactor.

Its subcellular location is the cytoplasm. The catalysed reaction is (R)-pantothenate + ATP = (R)-4'-phosphopantothenate + ADP + H(+). Its pathway is cofactor biosynthesis; coenzyme A biosynthesis; CoA from (R)-pantothenate: step 1/5. Functionally, catalyzes the phosphorylation of pantothenate (Pan), the first step in CoA biosynthesis. This is Type III pantothenate kinase from Maricaulis maris (strain MCS10) (Caulobacter maris).